A 169-amino-acid chain; its full sequence is ATP synthase subunit b (169 aa).

The helical transmembrane segment at 11–31 (IPSFIAQIVNFGLLLGLLYLF) threads the bilayer.

Belongs to the ATPase B chain family. F-type ATPases have 2 components, F(1) - the catalytic core - and F(0) - the membrane proton channel. F(1) has five subunits: alpha(3), beta(3), gamma(1), delta(1), epsilon(1). F(0) has three main subunits: a(1), b(2) and c(10-14). The alpha and beta chains form an alternating ring which encloses part of the gamma chain. F(1) is attached to F(0) by a central stalk formed by the gamma and epsilon chains, while a peripheral stalk is formed by the delta and b chains.

The protein resides in the cell membrane. Its function is as follows. F(1)F(0) ATP synthase produces ATP from ADP in the presence of a proton or sodium gradient. F-type ATPases consist of two structural domains, F(1) containing the extramembraneous catalytic core and F(0) containing the membrane proton channel, linked together by a central stalk and a peripheral stalk. During catalysis, ATP synthesis in the catalytic domain of F(1) is coupled via a rotary mechanism of the central stalk subunits to proton translocation. In terms of biological role, component of the F(0) channel, it forms part of the peripheral stalk, linking F(1) to F(0). This chain is ATP synthase subunit b, found in Dehalococcoides mccartyi (strain ATCC BAA-2100 / JCM 16839 / KCTC 5957 / BAV1).